The sequence spans 262 residues: Phosphatidylglycerol--prolipoprotein diacylglyceryl transferase (262 aa).

Helical transmembrane passes span 17-37 (LAIH…YALG), 57-77 (LIFY…VLFY), 95-115 (GGMS…LFAH), and 119-139 (LGFF…LAAG). R140 lines the a 1,2-diacyl-sn-glycero-3-phospho-(1'-sn-glycerol) pocket. Helical transmembrane passes span 173-193 (PSQL…LWWY), 200-220 (AGQV…LVEF), and 227-247 (FLGL…PMVL).

It belongs to the Lgt family.

The protein resides in the cell inner membrane. It catalyses the reaction L-cysteinyl-[prolipoprotein] + a 1,2-diacyl-sn-glycero-3-phospho-(1'-sn-glycerol) = an S-1,2-diacyl-sn-glyceryl-L-cysteinyl-[prolipoprotein] + sn-glycerol 1-phosphate + H(+). It participates in protein modification; lipoprotein biosynthesis (diacylglyceryl transfer). Functionally, catalyzes the transfer of the diacylglyceryl group from phosphatidylglycerol to the sulfhydryl group of the N-terminal cysteine of a prolipoprotein, the first step in the formation of mature lipoproteins. The protein is Phosphatidylglycerol--prolipoprotein diacylglyceryl transferase of Bordetella parapertussis (strain 12822 / ATCC BAA-587 / NCTC 13253).